The primary structure comprises 349 residues: tRNA pseudouridine synthase D (349 aa).

Residue F27 coordinates substrate. The active-site Nucleophile is the D80. A substrate-binding site is contributed by N129. Positions 155 to 303 (GVPNYFGAQR…VEAARRAMLL (149 aa)) constitute a TRUD domain. Substrate is bound at residue F329.

It belongs to the pseudouridine synthase TruD family.

The catalysed reaction is uridine(13) in tRNA = pseudouridine(13) in tRNA. Responsible for synthesis of pseudouridine from uracil-13 in transfer RNAs. The protein is tRNA pseudouridine synthase D of Escherichia coli O17:K52:H18 (strain UMN026 / ExPEC).